The sequence spans 215 residues: LysM and putative peptidoglycan-binding domain-containing protein 2 (215 aa).

The tract at residues M1 to L40 is disordered. Residue A2 is modified to N-acetylalanine. S5, S24, S33, and S57 each carry phosphoserine. The region spanning V71–I115 is the LysM domain. 2 disordered regions span residues E135 to A176 and R195 to S215. A compositionally biased stretch (acidic residues) spans Q145 to L156. Positions P157–A169 are enriched in pro residues. Residues K196–E205 are compositionally biased toward basic and acidic residues.

This is LysM and putative peptidoglycan-binding domain-containing protein 2 (Lysmd2) from Mus musculus (Mouse).